We begin with the raw amino-acid sequence, 456 residues long: tRNA modification GTPase MnmE (456 aa).

Arg-24, Glu-81, and Lys-120 together coordinate (6S)-5-formyl-5,6,7,8-tetrahydrofolate. Positions 216–379 constitute a TrmE-type G domain; that stretch reads GMKVVIAGRP…LREHLKECIG (164 aa). Asn-226 is a K(+) binding site. GTP is bound by residues 226–231, 245–251, and 270–273; these read NAGKSS, TAIEGTT, and DTAG. Residue Ser-230 participates in Mg(2+) binding. Residues Thr-245, Ile-247, and Thr-250 each coordinate K(+). Thr-251 is a binding site for Mg(2+). Lys-456 contributes to the (6S)-5-formyl-5,6,7,8-tetrahydrofolate binding site.

The protein belongs to the TRAFAC class TrmE-Era-EngA-EngB-Septin-like GTPase superfamily. TrmE GTPase family. As to quaternary structure, homodimer. Heterotetramer of two MnmE and two MnmG subunits. K(+) is required as a cofactor.

The protein localises to the cytoplasm. Its function is as follows. Exhibits a very high intrinsic GTPase hydrolysis rate. Involved in the addition of a carboxymethylaminomethyl (cmnm) group at the wobble position (U34) of certain tRNAs, forming tRNA-cmnm(5)s(2)U34. The polypeptide is tRNA modification GTPase MnmE (Marinobacter nauticus (strain ATCC 700491 / DSM 11845 / VT8) (Marinobacter aquaeolei)).